A 303-amino-acid polypeptide reads, in one-letter code: tRNA pseudouridine synthase B (303 aa).

The Nucleophile role is filled by Asp47.

The protein belongs to the pseudouridine synthase TruB family. Type 1 subfamily.

The catalysed reaction is uridine(55) in tRNA = pseudouridine(55) in tRNA. Responsible for synthesis of pseudouridine from uracil-55 in the psi GC loop of transfer RNAs. This chain is tRNA pseudouridine synthase B, found in Legionella pneumophila (strain Lens).